A 660-amino-acid polypeptide reads, in one-letter code: Squalene--hopene cyclase (660 aa).

The PFTB 1 repeat unit spans residues 73 to 114; sequence EAKIGNYLRRVQGAHGGWPLVHDGEFDMSASVKAYFALKMIG. Aspartate 394 serves as the catalytic Proton donor. 2 PFTB repeats span residues 419–460 and 536–586; these read IDRG…GALL and IRKA…ALMA.

Belongs to the terpene cyclase/mutase family.

Its subcellular location is the cell membrane. The enzyme catalyses squalene = hop-22(29)-ene. It catalyses the reaction squalene + H2O = hopan-22-ol. Its pathway is secondary metabolite biosynthesis; hopanoid biosynthesis. Functionally, catalyzes the cyclization of squalene into hopene. The protein is Squalene--hopene cyclase (shc) of Bradyrhizobium diazoefficiens (strain JCM 10833 / BCRC 13528 / IAM 13628 / NBRC 14792 / USDA 110).